The following is a 351-amino-acid chain: Histidinol-phosphate aminotransferase 2 (351 aa).

N6-(pyridoxal phosphate)lysine is present on K210.

It belongs to the class-II pyridoxal-phosphate-dependent aminotransferase family. Histidinol-phosphate aminotransferase subfamily. Homodimer. Requires pyridoxal 5'-phosphate as cofactor.

It catalyses the reaction L-histidinol phosphate + 2-oxoglutarate = 3-(imidazol-4-yl)-2-oxopropyl phosphate + L-glutamate. It participates in amino-acid biosynthesis; L-histidine biosynthesis; L-histidine from 5-phospho-alpha-D-ribose 1-diphosphate: step 7/9. The polypeptide is Histidinol-phosphate aminotransferase 2 (hisC2) (Rhizobium meliloti (strain 1021) (Ensifer meliloti)).